The following is a 744-amino-acid chain: NAD(P)H-quinone oxidoreductase subunit 5, chloroplastic (744 aa).

Transmembrane regions (helical) follow at residues 9 to 29 (WIIPFLPLPVPMLIGLGLFLF), 40 to 60 (WAFQSVLLLSIVMIFSMNLSI), 89 to 109 (IDPLTSIMSILITTVGILVLI), 125 to 145 (FVYMSFFSTSMLGLVTSSNLI), 147 to 167 (IYIFWELVGICSYLLIGFWFT), 185 to 205 (GDFGLLLGILGFYWITGSFEF), 219 to 239 (NEVNFLFVTLCAVLLFAGAIA), 258 to 278 (TPISALIHAATMVAAGIFLVA), 290 to 312 (IMNFISLIGIITVFLGATLALAQ), 327 to 347 (LGYMMLALGMGSYRSALFHLI), 354 to 374 (ALLFLGSGSVIHSMETLVGYC), 396 to 416 (TSFLLGTLSLCGIPPLACFWS), 425 to 445 (WLYSPIFAIIAWSTAGLTAFY), 549 to 569 (LFPILILVLFTLFVGFLGIPF), 608 to 628 (VFSVSISSFGIFIAFFLYKPV), and 724 to 744 (YLFFYFSYVSIFLLIYYFLNF).

It belongs to the complex I subunit 5 family. NDH is composed of at least 16 different subunits, 5 of which are encoded in the nucleus.

It localises to the plastid. The protein resides in the chloroplast thylakoid membrane. It carries out the reaction a plastoquinone + NADH + (n+1) H(+)(in) = a plastoquinol + NAD(+) + n H(+)(out). The enzyme catalyses a plastoquinone + NADPH + (n+1) H(+)(in) = a plastoquinol + NADP(+) + n H(+)(out). Its function is as follows. NDH shuttles electrons from NAD(P)H:plastoquinone, via FMN and iron-sulfur (Fe-S) centers, to quinones in the photosynthetic chain and possibly in a chloroplast respiratory chain. The immediate electron acceptor for the enzyme in this species is believed to be plastoquinone. Couples the redox reaction to proton translocation, and thus conserves the redox energy in a proton gradient. The chain is NAD(P)H-quinone oxidoreductase subunit 5, chloroplastic (ndhF) from Mutisia acuminata.